Consider the following 157-residue polypeptide: ATP synthase subunit b (157 aa).

A helical transmembrane segment spans residues 7 to 29; it reads LISQAIAFSLFILFTARFVWPYL.

This sequence belongs to the ATPase B chain family. F-type ATPases have 2 components, F(1) - the catalytic core - and F(0) - the membrane proton channel. F(1) has five subunits: alpha(3), beta(3), gamma(1), delta(1), epsilon(1). F(0) has three main subunits: a(1), b(2) and c(10-14). The alpha and beta chains form an alternating ring which encloses part of the gamma chain. F(1) is attached to F(0) by a central stalk formed by the gamma and epsilon chains, while a peripheral stalk is formed by the delta and b chains.

The protein localises to the cell inner membrane. F(1)F(0) ATP synthase produces ATP from ADP in the presence of a proton or sodium gradient. F-type ATPases consist of two structural domains, F(1) containing the extramembraneous catalytic core and F(0) containing the membrane proton channel, linked together by a central stalk and a peripheral stalk. During catalysis, ATP synthesis in the catalytic domain of F(1) is coupled via a rotary mechanism of the central stalk subunits to proton translocation. In terms of biological role, component of the F(0) channel, it forms part of the peripheral stalk, linking F(1) to F(0). The protein is ATP synthase subunit b of Nitrosomonas europaea (strain ATCC 19718 / CIP 103999 / KCTC 2705 / NBRC 14298).